The following is a 64-amino-acid chain: DNA gyrase inhibitor YacG (64 aa).

Zn(2+) contacts are provided by C10, C13, C29, and C33.

Belongs to the DNA gyrase inhibitor YacG family. As to quaternary structure, interacts with GyrB. Zn(2+) is required as a cofactor.

Its function is as follows. Inhibits all the catalytic activities of DNA gyrase by preventing its interaction with DNA. Acts by binding directly to the C-terminal domain of GyrB, which probably disrupts DNA binding by the gyrase. This chain is DNA gyrase inhibitor YacG, found in Pectobacterium atrosepticum (strain SCRI 1043 / ATCC BAA-672) (Erwinia carotovora subsp. atroseptica).